We begin with the raw amino-acid sequence, 370 residues long: Cytochrome b (370 aa).

4 helical membrane-spanning segments follow: residues 25-45 (FGSM…FLAV), 69-90 (WMMQ…YIHI), 105-125 (WLSG…GYVL), and 170-190 (FFAL…LHIL). The heme b site is built by H75 and H89. 2 residues coordinate heme b: H174 and H188. H193 is an a ubiquinone binding site. 4 helical membrane-spanning segments follow: residues 218–238 (YKDM…VSFF), 280–300 (LGGA…PFTH), 312–332 (FMQL…WTAT), and 339–358 (FTTI…ISNP).

It belongs to the cytochrome b family. In terms of assembly, the cytochrome bc1 complex contains 3 respiratory subunits (MT-CYB, CYC1 and UQCRFS1), 2 core proteins (UQCRC1 and UQCRC2) and probably 6 low-molecular weight proteins. Heme b is required as a cofactor.

The protein resides in the mitochondrion inner membrane. Functionally, component of the ubiquinol-cytochrome c reductase complex (complex III or cytochrome b-c1 complex) that is part of the mitochondrial respiratory chain. The b-c1 complex mediates electron transfer from ubiquinol to cytochrome c. Contributes to the generation of a proton gradient across the mitochondrial membrane that is then used for ATP synthesis. The protein is Cytochrome b (MT-CYB) of Chilabothrus exsul (Abaco Island boa).